A 262-amino-acid polypeptide reads, in one-letter code: Triosephosphate isomerase (262 aa).

A substrate-binding site is contributed by 13–15; it reads NWK. His103 (electrophile) is an active-site residue. Catalysis depends on Glu175, which acts as the Proton acceptor. Residues Gly181, Ser221, and 242–243 contribute to the substrate site; that span reads GG.

Belongs to the triosephosphate isomerase family. As to quaternary structure, homodimer.

Its subcellular location is the cytoplasm. It catalyses the reaction D-glyceraldehyde 3-phosphate = dihydroxyacetone phosphate. Its pathway is carbohydrate biosynthesis; gluconeogenesis. It functions in the pathway carbohydrate degradation; glycolysis; D-glyceraldehyde 3-phosphate from glycerone phosphate: step 1/1. In terms of biological role, involved in the gluconeogenesis. Catalyzes stereospecifically the conversion of dihydroxyacetone phosphate (DHAP) to D-glyceraldehyde-3-phosphate (G3P). The chain is Triosephosphate isomerase from Corynebacterium efficiens (strain DSM 44549 / YS-314 / AJ 12310 / JCM 11189 / NBRC 100395).